We begin with the raw amino-acid sequence, 488 residues long: MQWEVVIGLETHAQLSTASKIFSGASTAFGAAPNTQAAPVDLALPGVLPVLNKGAVERAITFGLAIGAKIASKSIFARKNYFYPDLPKGYQISQYEIPVVQGGTLTIQVEGRNGQPGYEKTVNLTRAHLEEDAGKSLHEDFAGMTGIDLNRAGTPLLEIVTEPDMRSAAEAVAYARALHALVMWLGICDGNMQEGSFRCDANVSVRRGPDAPFGTRCEIKNLNSFRFLEEAINYEVRRQIELIEDGGTVVQETRLYDPDRKETRSMRSKEDAHDYRYFPDPDLLPLMIGADWVDAVRATLPELPAAMAARFESAYGLPRYDASILTATKATAAYFEAVVAAAGAANAKAAANWIMGEVASNLNRAGLEIDAAPVSPVQLAGLLARIADGTISNNTAKKDVFPAMWAGEHGGDADAIIAEKGLKQMSDSGELEKIIDEVLAANAKSVEEFRAGKDKAFNALVGQAMKATRGKANPSQVNELLKKKLGAA.

It belongs to the GatB/GatE family. GatB subfamily. Heterotrimer of A, B and C subunits.

It catalyses the reaction L-glutamyl-tRNA(Gln) + L-glutamine + ATP + H2O = L-glutaminyl-tRNA(Gln) + L-glutamate + ADP + phosphate + H(+). The enzyme catalyses L-aspartyl-tRNA(Asn) + L-glutamine + ATP + H2O = L-asparaginyl-tRNA(Asn) + L-glutamate + ADP + phosphate + 2 H(+). Functionally, allows the formation of correctly charged Asn-tRNA(Asn) or Gln-tRNA(Gln) through the transamidation of misacylated Asp-tRNA(Asn) or Glu-tRNA(Gln) in organisms which lack either or both of asparaginyl-tRNA or glutaminyl-tRNA synthetases. The reaction takes place in the presence of glutamine and ATP through an activated phospho-Asp-tRNA(Asn) or phospho-Glu-tRNA(Gln). The polypeptide is Aspartyl/glutamyl-tRNA(Asn/Gln) amidotransferase subunit B (Ralstonia nicotianae (strain ATCC BAA-1114 / GMI1000) (Ralstonia solanacearum)).